Reading from the N-terminus, the 92-residue chain is Large ribosomal subunit protein eL43 (92 aa).

4 residues coordinate Zn(2+): Cys-39, Cys-42, Cys-57, and Cys-60. A C4-type zinc finger spans residues 39-60 (CSFCGKTKMKRKAVGIWHCGSC).

It belongs to the eukaryotic ribosomal protein eL43 family. In terms of assembly, component of the large ribosomal subunit.

It localises to the cytoplasm. Component of the large ribosomal subunit. The ribosome is a large ribonucleoprotein complex responsible for the synthesis of proteins in the cell. This Gallus gallus (Chicken) protein is Large ribosomal subunit protein eL43 (RPL37A).